A 293-amino-acid chain; its full sequence is Proline iminopeptidase (293 aa).

Catalysis depends on S105, which acts as the Nucleophile. The active site involves D244. The active-site Proton donor is H271.

The protein belongs to the peptidase S33 family. In terms of assembly, part of the tricorn proteolytic complex.

The catalysed reaction is Release of N-terminal proline from a peptide.. Functionally, cleaves H-Pro-AMC as well as a wide spectrum of amino acid substrates and several peptide substrates without a proline at the N-terminus. Proteases F1, F2 and F3 degrade oligopeptides produced by Tricorn (themselves probably produced by the proteasome) yielding free amino acids. The polypeptide is Proline iminopeptidase (pip) (Thermoplasma acidophilum (strain ATCC 25905 / DSM 1728 / JCM 9062 / NBRC 15155 / AMRC-C165)).